The primary structure comprises 263 residues: UPF0758 protein NGR_c13970 (263 aa).

The MPN domain occupies 141–263 (VLSSWSAVID…HVSMKGLRLF (123 aa)). The Zn(2+) site is built by histidine 212, histidine 214, and aspartate 225. The JAMM motif motif lies at 212-225 (HNHPSGDPTPSRAD).

The protein belongs to the UPF0758 family.

This Sinorhizobium fredii (strain NBRC 101917 / NGR234) protein is UPF0758 protein NGR_c13970.